A 100-amino-acid chain; its full sequence is Small ribosomal subunit protein uS14 (100 aa).

Residues Cys-63, Cys-66, Cys-79, and Cys-82 each coordinate Zn(2+).

It belongs to the universal ribosomal protein uS14 family. Part of the 30S ribosomal subunit. Contacts proteins S3 and S10. It depends on Zn(2+) as a cofactor.

Its function is as follows. Binds 16S rRNA, required for the assembly of 30S particles and may also be responsible for determining the conformation of the 16S rRNA at the A site. The protein is Small ribosomal subunit protein uS14 (rpsN) of Legionella pneumophila (strain Paris).